The sequence spans 148 residues: Large ribosomal subunit protein bL9 (148 aa).

Belongs to the bacterial ribosomal protein bL9 family.

Binds to the 23S rRNA. This Parafrankia sp. (strain EAN1pec) protein is Large ribosomal subunit protein bL9.